The chain runs to 168 residues: uncharacterized protein (168 aa).

Residues 14–168 (IDIPLLDAAS…EYKHWIYVTK (155 aa)) enclose the N-acetyltransferase domain.

Belongs to the acetyltransferase family.

This is an uncharacterized protein from Bacillus subtilis (strain 168).